Consider the following 352-residue polypeptide: Molybdenum import ATP-binding protein ModC (352 aa).

The ABC transporter domain maps to 1-229 (MLELNFSQTL…SVMNPWLPKE (229 aa)). 31–38 (GVSGAGKT) is an ATP binding site. Residues 289–352 (QTSIRNVLRA…AQIKSVSITA (64 aa)) form the Mop domain.

This sequence belongs to the ABC transporter superfamily. Molybdate importer (TC 3.A.1.8) family. The complex is composed of two ATP-binding proteins (ModC), two transmembrane proteins (ModB) and a solute-binding protein (ModA).

The protein localises to the cell inner membrane. The enzyme catalyses molybdate(out) + ATP + H2O = molybdate(in) + ADP + phosphate + H(+). Part of the ABC transporter complex ModABC involved in molybdenum import. Responsible for energy coupling to the transport system. This chain is Molybdenum import ATP-binding protein ModC, found in Escherichia coli O6:H1 (strain CFT073 / ATCC 700928 / UPEC).